Reading from the N-terminus, the 131-residue chain is Small ribosomal subunit protein uS8 (131 aa).

The protein belongs to the universal ribosomal protein uS8 family. As to quaternary structure, part of the 30S ribosomal subunit. Contacts proteins S5 and S12.

Functionally, one of the primary rRNA binding proteins, it binds directly to 16S rRNA central domain where it helps coordinate assembly of the platform of the 30S subunit. The protein is Small ribosomal subunit protein uS8 of Janthinobacterium sp. (strain Marseille) (Minibacterium massiliensis).